A 650-amino-acid chain; its full sequence is DNA gyrase subunit B (650 aa).

Basic and acidic residues predominate over residues 400-414; that stretch reads RRSQEARELTRRKSP. The interval 400–422 is disordered; the sequence is RRSQEARELTRRKSPFDSGSLPG. One can recognise a Toprim domain in the interval 435 to 549; it reads SELYIVEGDS…QGNIYIAQPP (115 aa). Residues Glu441, Asp514, and Asp516 each coordinate Mg(2+).

The protein belongs to the type II topoisomerase GyrB family. As to quaternary structure, heterotetramer, composed of two GyrA and two GyrB chains. In the heterotetramer, GyrA contains the active site tyrosine that forms a transient covalent intermediate with DNA, while GyrB binds cofactors and catalyzes ATP hydrolysis. Requires Mg(2+) as cofactor. The cofactor is Mn(2+). It depends on Ca(2+) as a cofactor.

The protein localises to the cytoplasm. It carries out the reaction ATP-dependent breakage, passage and rejoining of double-stranded DNA.. Its function is as follows. A type II topoisomerase that negatively supercoils closed circular double-stranded (ds) DNA in an ATP-dependent manner to modulate DNA topology and maintain chromosomes in an underwound state. Negative supercoiling favors strand separation, and DNA replication, transcription, recombination and repair, all of which involve strand separation. Also able to catalyze the interconversion of other topological isomers of dsDNA rings, including catenanes and knotted rings. Type II topoisomerases break and join 2 DNA strands simultaneously in an ATP-dependent manner. This Mycoplasma pneumoniae (strain ATCC 29342 / M129 / Subtype 1) (Mycoplasmoides pneumoniae) protein is DNA gyrase subunit B.